Consider the following 1139-residue polypeptide: uncharacterized protein (1139 aa).

Belongs to the IIV-6 295L family.

This is an uncharacterized protein from Aedes vexans (Inland floodwater mosquito).